A 473-amino-acid chain; its full sequence is Chromosomal replication initiator protein DnaA (473 aa).

The tract at residues 1–76 is domain I, interacts with DnaA modulators; the sequence is MNYHSTNVNE…RTVLGRVIGP (76 aa). The domain II stretch occupies residues 76–135; that stretch reads PNASLQYNALVDNSSPKYPGTVTLAGCADGGQAAEQFDVNLLHRHMPNAATHSEAQDFDT. Residues 136 to 353 are domain III, AAA+ region; it reads QLNSRLNFRN…GTLVSLITNS (218 aa). Residues glycine 181, glycine 183, lysine 184, and threonine 185 each coordinate ATP. The segment at 354 to 473 is domain IV, binds dsDNA; it reads VVVGKEIDLT…VERAEQLIAN (120 aa).

It belongs to the DnaA family. As to quaternary structure, oligomerizes as a right-handed, spiral filament on DNA at oriC.

The protein localises to the cytoplasm. Plays an essential role in the initiation and regulation of chromosomal replication. ATP-DnaA binds to the origin of replication (oriC) to initiate formation of the DNA replication initiation complex once per cell cycle. Binds the DnaA box (a 9 base pair repeat at the origin) and separates the double-stranded (ds)DNA. Forms a right-handed helical filament on oriC DNA; dsDNA binds to the exterior of the filament while single-stranded (ss)DNA is stabiized in the filament's interior. The ATP-DnaA-oriC complex binds and stabilizes one strand of the AT-rich DNA unwinding element (DUE), permitting loading of DNA polymerase. After initiation quickly degrades to an ADP-DnaA complex that is not apt for DNA replication. Binds acidic phospholipids. The sequence is that of Chromosomal replication initiator protein DnaA from Porphyromonas gingivalis (strain ATCC 33277 / DSM 20709 / CIP 103683 / JCM 12257 / NCTC 11834 / 2561).